The sequence spans 136 residues: Large ribosomal subunit protein uL16 (136 aa).

It belongs to the universal ribosomal protein uL16 family. In terms of assembly, part of the 50S ribosomal subunit.

Binds 23S rRNA and is also seen to make contacts with the A and possibly P site tRNAs. The chain is Large ribosomal subunit protein uL16 from Shewanella halifaxensis (strain HAW-EB4).